Here is a 304-residue protein sequence, read N- to C-terminus: N-acetylmuramic acid 6-phosphate etherase (304 aa).

The SIS domain occupies 57–220 (AVKGLSAGGR…STATMVGLGK (164 aa)). Glutamate 85 acts as the Proton donor in catalysis. Glutamate 116 is a catalytic residue.

It belongs to the GCKR-like family. MurNAc-6-P etherase subfamily. Homodimer.

It catalyses the reaction N-acetyl-D-muramate 6-phosphate + H2O = N-acetyl-D-glucosamine 6-phosphate + (R)-lactate. It participates in amino-sugar metabolism; N-acetylmuramate degradation. Its function is as follows. Specifically catalyzes the cleavage of the D-lactyl ether substituent of MurNAc 6-phosphate, producing GlcNAc 6-phosphate and D-lactate. This Cutibacterium acnes (strain DSM 16379 / KPA171202) (Propionibacterium acnes) protein is N-acetylmuramic acid 6-phosphate etherase.